Here is a 397-residue protein sequence, read N- to C-terminus: 1-deoxy-D-xylulose 5-phosphate reductoisomerase (397 aa).

Thr10, Gly11, Ser12, Ile13, Asn38, and Asn125 together coordinate NADPH. Lys126 contacts 1-deoxy-D-xylulose 5-phosphate. Glu127 provides a ligand contact to NADPH. Asp151 contributes to the Mn(2+) binding site. 1-deoxy-D-xylulose 5-phosphate contacts are provided by Ser152, Glu153, Ser187, and His210. Residue Glu153 coordinates Mn(2+). Residue Gly216 coordinates NADPH. Ser223, Asn228, Lys229, and Glu232 together coordinate 1-deoxy-D-xylulose 5-phosphate. Glu232 contacts Mn(2+).

The protein belongs to the DXR family. In terms of assembly, homodimer. Requires Mg(2+) as cofactor. It depends on Mn(2+) as a cofactor.

It catalyses the reaction 2-C-methyl-D-erythritol 4-phosphate + NADP(+) = 1-deoxy-D-xylulose 5-phosphate + NADPH + H(+). The protein operates within isoprenoid biosynthesis; isopentenyl diphosphate biosynthesis via DXP pathway; isopentenyl diphosphate from 1-deoxy-D-xylulose 5-phosphate: step 1/6. Functionally, catalyzes the NADPH-dependent rearrangement and reduction of 1-deoxy-D-xylulose-5-phosphate (DXP) to 2-C-methyl-D-erythritol 4-phosphate (MEP). In Blochmanniella pennsylvanica (strain BPEN), this protein is 1-deoxy-D-xylulose 5-phosphate reductoisomerase.